The following is a 428-amino-acid chain: Methyl-branched lipid omega-hydroxylase (428 aa).

Cys-379 is a heme binding site.

This sequence belongs to the cytochrome P450 family. Heme is required as a cofactor.

It carries out the reaction a methyl-branched lipid + O2 + 2 reduced ferredoxin [iron-sulfur] cluster + 2 H(+) = an omega-hydroxy-methyl-branched lipid + H2O + 2 oxidized ferredoxin [iron-sulfur] cluster.. The catalysed reaction is cholest-4-en-3-one + 6 reduced [2Fe-2S]-[ferredoxin] + 3 O2 + 5 H(+) = (25R)-3-oxocholest-4-en-26-oate + 6 oxidized [2Fe-2S]-[ferredoxin] + 4 H2O. The protein operates within lipid metabolism; branched-chain fatty acid metabolism. Primarily hydroxylates the omega-carbon of a number of methyl-branched lipids, including (2E,6E)-farnesol, phytanate, geranylgeraniol, 15-methylpalmitate and (2E,6E)-farnesyl diphosphate. Also catalyzes the sequential oxidation of the terminal methyl of cholest-4-en-3-one into (25R)-26-hydroxycholest-4-en-3-one (alcohol), (25R)-26-oxocholest-4-en-3-one (aldehyde), to finally yield the carboxylic acid (25R)-3-oxocholest-4-en-26-oate. Also able to sequentially oxidize cholesterol itself, not only cholest-4-en-3-one. This is Methyl-branched lipid omega-hydroxylase (cyp124) from Mycobacterium bovis (strain ATCC BAA-935 / AF2122/97).